Reading from the N-terminus, the 473-residue chain is 23S rRNA (uracil(1939)-C(5))-methyltransferase RlmD (473 aa).

The interval 6 to 27 is disordered; that stretch reads KPSKGKNKSNVKGRVRGAGSGE. Residues 8–20 show a composition bias toward basic residues; that stretch reads SKGKNKSNVKGRV. The region spanning 42–99 is the TRAM domain; it reads DDINAANEAVTIDGMDWQGQGVARGDTLYFVDGALPGETVEIKALSSNKQIVNAKVTK. [4Fe-4S] cluster is bound by residues cysteine 112, cysteine 118, cysteine 121, and cysteine 199. Residues glutamine 304, phenylalanine 333, asparagine 338, glutamate 354, aspartate 381, and aspartate 402 each contribute to the S-adenosyl-L-methionine site. Catalysis depends on cysteine 428, which acts as the Nucleophile.

The protein belongs to the class I-like SAM-binding methyltransferase superfamily. RNA M5U methyltransferase family. RlmD subfamily.

It catalyses the reaction uridine(1939) in 23S rRNA + S-adenosyl-L-methionine = 5-methyluridine(1939) in 23S rRNA + S-adenosyl-L-homocysteine + H(+). Its function is as follows. Catalyzes the formation of 5-methyl-uridine at position 1939 (m5U1939) in 23S rRNA. The polypeptide is 23S rRNA (uracil(1939)-C(5))-methyltransferase RlmD (Alteromonas naphthalenivorans).